The following is a 362-amino-acid chain: Porin Omp2b (362 aa).

An N-terminal signal peptide occupies residues 1 to 22; sequence MNIKSLLLGSAAALVAASGAQA.

The protein belongs to the alphaproteobacteria porin family. As to quaternary structure, homotrimer.

The protein resides in the cell outer membrane. Its function is as follows. Forms passive diffusion pores that allow small molecular weight hydrophilic materials across the outer membrane. The chain is Porin Omp2b (omp2b) from Brucella suis biovar 1 (strain 1330).